A 419-amino-acid chain; its full sequence is MSMTVSEKILARASGKDRVEAGEIVMADIDVAMTHDLTGPLSVESFRAIGEDRVWDPEKIVVIFDHQVPADSIEAAQNHMIMRDFVEEQGIRNFYDVREGVCHQVLPEKGHVVPGEVVVGTDSHTCTHGALGAFATGIGSTDMAMVFATGKLWFRVPETLRFDVRGKLREHVYAKDVILNIIGRVGADGATYMACEFAGETVAEMSVSDRMVLSNMAIEMGGKTGIVEPDEKTLNYVRRRSGKPWRVFKTDPDAPSLSVMEVDVSDLEPQVACPHNVDNVKPVTEVEGTEIDQVFLGSCTNGRLSDLRDAAAILKNRKVSDSVRMLVIPASREVYRRALDEGLIEIFVDAGALVCNPCCGPCLGGHVGLVGPGEVSLSTSNRNFRGRQGSPEAEVYLSSAAVAAASAVKGSITHPGSLK.

Residues Cys-299, Cys-359, and Cys-362 each coordinate [4Fe-4S] cluster.

This sequence belongs to the aconitase/IPM isomerase family. LeuC type 2 subfamily. As to quaternary structure, heterodimer of LeuC and LeuD. Requires [4Fe-4S] cluster as cofactor.

It carries out the reaction (2R,3S)-3-isopropylmalate = (2S)-2-isopropylmalate. It functions in the pathway amino-acid biosynthesis; L-leucine biosynthesis; L-leucine from 3-methyl-2-oxobutanoate: step 2/4. Functionally, catalyzes the isomerization between 2-isopropylmalate and 3-isopropylmalate, via the formation of 2-isopropylmaleate. In Methanothermobacter thermautotrophicus (strain ATCC 29096 / DSM 1053 / JCM 10044 / NBRC 100330 / Delta H) (Methanobacterium thermoautotrophicum), this protein is Probable 3-isopropylmalate dehydratase large subunit.